Here is a 145-residue protein sequence, read N- to C-terminus: uncharacterized protein (145 aa).

It belongs to the methyltransferase superfamily.

Its function is as follows. Probable methyltransferase. This is an uncharacterized protein from Schizosaccharomyces pombe (strain 972 / ATCC 24843) (Fission yeast).